The sequence spans 199 residues: HTH-type transcriptional regulator BetI (199 aa).

One can recognise an HTH tetR-type domain in the interval 8–68 (EIRKPQLVKA…ETMREILRQL (61 aa)). Residues 31–50 (SISLISKEAGVSTGIINHYF) constitute a DNA-binding region (H-T-H motif).

It functions in the pathway amine and polyamine biosynthesis; betaine biosynthesis via choline pathway [regulation]. In terms of biological role, repressor involved in the biosynthesis of the osmoprotectant glycine betaine. It represses transcription of the choline transporter BetT and the genes of BetAB involved in the synthesis of glycine betaine. The sequence is that of HTH-type transcriptional regulator BetI from Vibrio parahaemolyticus serotype O3:K6 (strain RIMD 2210633).